The following is a 168-amino-acid chain: MTSHLCCSNYSSPLPELLVCLHTEGSLTALLEVKAGQPLRVERSFEGYRLLSLAQKKQLGMQGAALSRPRLAWVREVQLYGNDELPWVQAQSLFPLSSLQGSARRLQQLKSTPIGYVLFKRSRTLPNQRFIKHTVDGWQRQTLYNWYGRPLLISETFLPQFCEKQLDI.

R75, I114, and E155 together coordinate substrate.

It belongs to the UbiC family.

The protein resides in the cytoplasm. It carries out the reaction chorismate = 4-hydroxybenzoate + pyruvate. The protein operates within cofactor biosynthesis; ubiquinone biosynthesis. Removes the pyruvyl group from chorismate, with concomitant aromatization of the ring, to provide 4-hydroxybenzoate (4HB) for the ubiquinone pathway. The chain is Probable chorismate pyruvate-lyase from Psychrobacter arcticus (strain DSM 17307 / VKM B-2377 / 273-4).